The sequence spans 101 residues: Large ribosomal subunit protein uL24 (101 aa).

Belongs to the universal ribosomal protein uL24 family. As to quaternary structure, part of the 50S ribosomal subunit.

One of two assembly initiator proteins, it binds directly to the 5'-end of the 23S rRNA, where it nucleates assembly of the 50S subunit. Its function is as follows. One of the proteins that surrounds the polypeptide exit tunnel on the outside of the subunit. The sequence is that of Large ribosomal subunit protein uL24 from Streptococcus agalactiae serotype III (strain NEM316).